We begin with the raw amino-acid sequence, 321 residues long: Acetyl-coenzyme A carboxylase carboxyl transferase subunit alpha (321 aa).

The region spanning 39–293 (RLQQKSQNLA…RRALGDALRQ (255 aa)) is the CoA carboxyltransferase C-terminal domain.

It belongs to the AccA family. In terms of assembly, acetyl-CoA carboxylase is a heterohexamer composed of biotin carboxyl carrier protein (AccB), biotin carboxylase (AccC) and two subunits each of ACCase subunit alpha (AccA) and ACCase subunit beta (AccD).

It localises to the cytoplasm. It carries out the reaction N(6)-carboxybiotinyl-L-lysyl-[protein] + acetyl-CoA = N(6)-biotinyl-L-lysyl-[protein] + malonyl-CoA. It participates in lipid metabolism; malonyl-CoA biosynthesis; malonyl-CoA from acetyl-CoA: step 1/1. In terms of biological role, component of the acetyl coenzyme A carboxylase (ACC) complex. First, biotin carboxylase catalyzes the carboxylation of biotin on its carrier protein (BCCP) and then the CO(2) group is transferred by the carboxyltransferase to acetyl-CoA to form malonyl-CoA. The polypeptide is Acetyl-coenzyme A carboxylase carboxyl transferase subunit alpha (Bordetella bronchiseptica (strain ATCC BAA-588 / NCTC 13252 / RB50) (Alcaligenes bronchisepticus)).